The sequence spans 247 residues: Protein NipSnap homolog 3B (247 aa).

Lysine 45, lysine 48, lysine 57, and lysine 166 each carry N6-succinyllysine.

This sequence belongs to the NipSnap family.

The protein localises to the cytoplasm. It is found in the cytosol. The chain is Protein NipSnap homolog 3B (Nipsnap3b) from Mus musculus (Mouse).